A 64-amino-acid polypeptide reads, in one-letter code: Large ribosomal subunit protein bL32 (64 aa).

The disordered stretch occupies residues methionine 1–alanine 23.

It belongs to the bacterial ribosomal protein bL32 family.

The polypeptide is Large ribosomal subunit protein bL32 (Xylella fastidiosa (strain M23)).